The following is a 326-amino-acid chain: Aspartate carbamoyltransferase catalytic subunit (326 aa).

Residues arginine 60 and threonine 61 each coordinate carbamoyl phosphate. Residue lysine 88 participates in L-aspartate binding. Residues arginine 110, histidine 143, and glutamine 146 each coordinate carbamoyl phosphate. Residues arginine 183 and arginine 239 each contribute to the L-aspartate site. Positions 280 and 281 each coordinate carbamoyl phosphate.

This sequence belongs to the aspartate/ornithine carbamoyltransferase superfamily. ATCase family. As to quaternary structure, heterododecamer (2C3:3R2) of six catalytic PyrB chains organized as two trimers (C3), and six regulatory PyrI chains organized as three dimers (R2).

It catalyses the reaction carbamoyl phosphate + L-aspartate = N-carbamoyl-L-aspartate + phosphate + H(+). The protein operates within pyrimidine metabolism; UMP biosynthesis via de novo pathway; (S)-dihydroorotate from bicarbonate: step 2/3. Catalyzes the condensation of carbamoyl phosphate and aspartate to form carbamoyl aspartate and inorganic phosphate, the committed step in the de novo pyrimidine nucleotide biosynthesis pathway. The sequence is that of Aspartate carbamoyltransferase catalytic subunit from Microcystis aeruginosa (strain NIES-843 / IAM M-2473).